A 528-amino-acid chain; its full sequence is MSWRLSFRTNLLIYNVRRRNYATKAAGKPATRPNRWKSVIGLEVHAQIQTNSKLFSGAEVAFSSPINSCVSLFDASIPGTLPVLNRKCVELGVRTALALGCKVNSVSMFDRKHYFYADLPAGYQITQQRAPLARGGLLSFPVFVPGVSRKPYYKSARLHQLQLEQDSGKSLHDPVERKSLVDLNRAGVPLMELVFEPDLETGEEAAALVKELILILTRLGSCSCRMEEGALRVDANISVHKENTPLGTRTEVKNIGSVRAVAQAIEFEIERQIGILDGGGKIFNETRAWDAAGRQTIAMRDKEVVQDYRFMPEPNLPPLHVNVDGECDADVVVDAVHIGSSLPELPEETRRQIVEIHNLTPEMAIILVNDITLYNHFRTILDEPGKARSPKAVANFLINELLTILNKNKIDIEECRIPSTHLAEVTDMLEGNIINAYLARLIVQEALDGEGRESPALLAQRNDWLMITDTERIEAMCKDAIKNNPKVVEKYRKGKEKMLYALAGEIAKVSEQKVDMAKSVDLLKNMLK.

Residues 1-21 (MSWRLSFRTNLLIYNVRRRNY) constitute a mitochondrion transit peptide.

Belongs to the GatB/GatE family. GatB subfamily. In terms of assembly, subunit of the heterotrimeric GatCAB amidotransferase (AdT) complex, composed of A, B and C subunits.

Its subcellular location is the mitochondrion. It catalyses the reaction L-glutamyl-tRNA(Gln) + L-glutamine + ATP + H2O = L-glutaminyl-tRNA(Gln) + L-glutamate + ADP + phosphate + H(+). Allows the formation of correctly charged Gln-tRNA(Gln) through the transamidation of misacylated Glu-tRNA(Gln) in the mitochondria. The reaction takes place in the presence of glutamine and ATP through an activated gamma-phospho-Glu-tRNA(Gln). This is Glutamyl-tRNA(Gln) amidotransferase subunit B, mitochondrial from Aedes aegypti (Yellowfever mosquito).